Here is an 817-residue protein sequence, read N- to C-terminus: Putative receptor protein kinase ZmPK1 (817 aa).

Positions 1–28 are cleaved as a signal peptide; it reads MPRPLAALLSTACILSFFIALFPRAASS. In terms of domain architecture, Bulb-type lectin spans 29–158; sequence RDILPLGSSL…GGNTVWQSFD (130 aa). The Extracellular segment spans residues 29-472; sequence RDILPLGSSL…HKTGGGESKW (444 aa). N-linked (GlcNAc...) asparagine glycosylation is found at Asn-83, Asn-128, Asn-228, and Asn-279. In terms of domain architecture, EGF-like spans 292-328; sequence MTQPCNIHGLCGPNGICHYSPTPTCSCPPGYATRNPG. 2 disulfide bridges follow: Cys-296-Cys-308 and Cys-302-Cys-316. Residues Asn-329 and Asn-339 are each glycosylated (N-linked (GlcNAc...) asparagine). The PAN domain occupies 342-424; sequence CDRYDKRSMR…VRTIYLKLPT (83 aa). Disulfide bonds link Cys-376–Cys-398 and Cys-384–Cys-386. The N-linked (GlcNAc...) asparagine glycan is linked to Asn-452. The chain crosses the membrane as a helical span at residues 473 to 498; it reads FYFYGFIAAFFVVEVSFISFAWFFVL. The Cytoplasmic segment spans residues 499-817; the sequence is KRELRPSELW…AVQTLLSADD (319 aa). One can recognise a Protein kinase domain in the interval 534–817; that stretch reads RKFKVELGRG…AVQTLLSADD (284 aa). ATP is bound by residues 540–548 and Lys-562; that span reads LGRGESGTV. Asp-658 functions as the Proton acceptor in the catalytic mechanism.

It belongs to the protein kinase superfamily. Ser/Thr protein kinase family. In terms of tissue distribution, expressed predominantly in the shoots and roots of young maize seedlings, and to a lesser extent in the silks.

The protein resides in the membrane. The catalysed reaction is L-seryl-[protein] + ATP = O-phospho-L-seryl-[protein] + ADP + H(+). It catalyses the reaction L-threonyl-[protein] + ATP = O-phospho-L-threonyl-[protein] + ADP + H(+). Its function is as follows. Probable receptor. Interaction with a ligand in the extracellular domain triggers the protein kinase activity of the cytoplasmic domain. The chain is Putative receptor protein kinase ZmPK1 (PK1) from Zea mays (Maize).